Here is a 166-residue protein sequence, read N- to C-terminus: uncharacterized protein (166 aa).

It to C.perfringens pCP13 PCP12.

This is an uncharacterized protein from Clostridium perfringens.